The primary structure comprises 234 residues: MKCVVSRADDLKRMLDLSDVPTKSQGEQDAGVLILLHDDGSEKLKVLLCVRSRQLRRHPGEVCFPGGMMDDEDGQNVRRTAIREAYEEVGVNENDDYLVLGNLPAFRARFGVLIHPTVALLRRPPTFVLSIGEVESIFWIPLSQFLEDTHHSTFLIDEFYMVHVFQFDEYPTTYGVTALMCIVVAIGLLGKLPNFNLMGNLTISDMLDKHLDSIEIIRHVYEFASRKFEPKSKI.

The Nudix hydrolase domain maps to 27-162 (EQDAGVLILL…TFLIDEFYMV (136 aa)). Positions 66–90 (GGMMDDEDGQNVRRTAIREAYEEVG) match the Nudix box motif. Residues Glu-84 and Glu-88 each coordinate Mg(2+). Residues 170-190 (YPTTYGVTALMCIVVAIGLLG) traverse the membrane as a helical segment. The Microbody targeting signal signature appears at 232–234 (SKI).

This sequence belongs to the Nudix hydrolase family. Requires Mg(2+) as cofactor. It depends on Mn(2+) as a cofactor.

The protein localises to the peroxisome membrane. In terms of biological role, coenzyme A diphosphatase which mediates the cleavage of CoA into 3',5'-ADP and 4'-phosphopantetheine. This is Peroxisomal coenzyme A diphosphatase ndx-8 (ndx-8) from Caenorhabditis elegans.